Here is a 510-residue protein sequence, read N- to C-terminus: Cytochrome P450 monooxygenase macH (510 aa).

Residues leucine 7–tyrosine 29 form a helical membrane-spanning segment. Cysteine 454 provides a ligand contact to heme.

The protein belongs to the cytochrome P450 family. Heme serves as cofactor.

Its subcellular location is the membrane. The protein operates within secondary metabolite biosynthesis; terpenoid biosynthesis. Functionally, cytochrome P450 monooxygenase; part of the gene cluster that mediates the biosynthesis of macrophorins, isoprenoid epoxycyclohexenones containing cyclized drimane moieties. The first step of the pathway is the synthesis of 6-methylsalicylic acid (6-MSA) by the polyketide synthase macA. 6-MSA is then converted to m-cresol by the decarboxylase macB. The cytochrome P450 monooxygenase macC then catalyzes the oxidation of m-cresol to toluquinol. Epoxidation of toluquinol is then performed by the short chain dehydrogenase macD, with the help of macE, and a further prenylation by macG leads to 7-deacetoxyyanuthone A. The next step is the hydroxylation of C-22 of 7-deacetoxyyanuthone A by the cytochrome P450 monooxygenase macH to yield 22-deacetylyanuthone A. O-Mevalon transferase macI then attaches mevalon to the hydroxyl group of 22-deacetylyanuthone A to produce yanuthone E. The terpene cyclase macJ catalyzes the cyclization of 22-deacetylyanuthone A to macrophorin A. MacJ is also able to catalyze cyclization of yanuthone E and 7-deacetoxyyanuthone A to their corresponding macrophorins. The macJ products can be further modified by macH and macJ, as well as by the FAD-dependent monooxygenase macF, to produce additional macrophorins, including 4'-oxomacrophorin A, 4'-oxomacrophorin D and 4'-oxomacrophorin E. The polypeptide is Cytochrome P450 monooxygenase macH (Penicillium terrestre).